The following is a 215-amino-acid chain: MATERHYSPLDRLLLQADTAMRTLLPFSGQPSRPSPAIVQPDVELDESQTRHIAGLMRINHTGEVCAQALYQGQALTAKLPQVRKAMEHAAEEEIDHLAWCEQRIRQLGSHPSVLNPLFYGMSFGIGALAGMVSDKVSLGFVAATEHQVCKHLDEHLEQIPHEDEKSRAILEQMRVDEEQHADSALEAGGYRFPAPVRFGMSMLAKVMTKSTYRI.

6 residues coordinate Fe cation: Glu64, Glu94, His97, Glu146, Glu178, and His181.

Belongs to the COQ7 family. Fe cation is required as a cofactor.

It localises to the cell membrane. The catalysed reaction is a 5-methoxy-2-methyl-3-(all-trans-polyprenyl)benzene-1,4-diol + AH2 + O2 = a 3-demethylubiquinol + A + H2O. It functions in the pathway cofactor biosynthesis; ubiquinone biosynthesis. In terms of biological role, catalyzes the hydroxylation of 2-nonaprenyl-3-methyl-6-methoxy-1,4-benzoquinol during ubiquinone biosynthesis. In Pseudomonas putida (strain W619), this protein is 3-demethoxyubiquinol 3-hydroxylase.